The primary structure comprises 170 residues: Flavodoxin (170 aa).

The region spanning 5–165 (IGLFYGTQTG…RIKSWVAQLK (161 aa)) is the Flavodoxin-like domain.

It belongs to the flavodoxin family. Requires FMN as cofactor.

Low-potential electron donor to a number of redox enzymes. This Nostoc sp. (strain PCC 7120 / SAG 25.82 / UTEX 2576) protein is Flavodoxin (isiB).